Reading from the N-terminus, the 364-residue chain is Chorismate synthase (364 aa).

Residues arginine 48 and arginine 54 each contribute to the NADP(+) site. Residues 125 to 127 (RSS), 238 to 239 (NA), glycine 278, 293 to 297 (KPTSS), and arginine 319 each bind FMN.

Belongs to the chorismate synthase family. Homotetramer. FMNH2 serves as cofactor.

It carries out the reaction 5-O-(1-carboxyvinyl)-3-phosphoshikimate = chorismate + phosphate. Its pathway is metabolic intermediate biosynthesis; chorismate biosynthesis; chorismate from D-erythrose 4-phosphate and phosphoenolpyruvate: step 7/7. Its function is as follows. Catalyzes the anti-1,4-elimination of the C-3 phosphate and the C-6 proR hydrogen from 5-enolpyruvylshikimate-3-phosphate (EPSP) to yield chorismate, which is the branch point compound that serves as the starting substrate for the three terminal pathways of aromatic amino acid biosynthesis. This reaction introduces a second double bond into the aromatic ring system. In Shewanella woodyi (strain ATCC 51908 / MS32), this protein is Chorismate synthase.